The following is a 918-amino-acid chain: MGKKRIYELAKEINVSSKDIIEKAQADGLDVKNHMSTLDDASEKHLRNAFKKNTTTTKPEEKRTPKFRSSKTGKTVVKKSDHPAADGTKGIQRLKSSNNESTTRNNNNNKNGNQNRNNTNGRPNNNQNRPNNNRNQNNNRNGNRPNQPKRDEKQDRIRASVAEAARMAAQANREIANEKPQANRQRTNSAKPGEQRREGRNNQNRPNNNNRNGNNVNRTNNNNRPNNNNRNNENRPSRPNNTNQTTNNRPANNTTRPAAPAATTANNSGEKKQDRFSGRNNNSRGGNRFGNNQNRPFNKENRKNKKRNRKAKRDGRMKETTNKVVTVRKERPLPDVLEYSEGINVAEIAKKIHREPAEIIKKLFMMGVMVNQNQSLDNDTVELLAADYGIEAQQKVEVDISDIDKIFEDEEKNTTNLVSRPPVVTIMGHVDHGKTTLLDKLRHSHITEGEAGGITQGIGAYQLKHDDKLITFLDTPGHAAFTEMRARGADVTDITILVVAADDGVMPQTIEAINHAKAANVPIIVAVNKIDKQGANPNHVMEQLTEYGLIPESWGGDTIFVEISAKLGQNIDELLDMILLQAEVLELKANPDQNAAGSVIEAQLDPGKGSIATILVQQGTMHVGDPIVIGNTFGRIRTMVNEHGRRVKEATPSTPVEITGLNGVPEAGDRFVVFDDEKSARAAGEERAKRAQMEERKRSNHVTLDNLFDSLKEGEMKKVDIIIKADVQGSVEALADSLQKIEVEGVRVNIIHKAVGAINESDVTLAAASNAIIIGFNVRPTAQAKQMADSEDVDIRLHRVIYNAIDEVESAMKGMLEPVYEEEIIGQVDIRETYKVSRVGTIAGGFVTEGFITRDSGVRLIRDGVVIYEGKLGSLKRFKDDVKEVKRGFELGLTVENYNDIKIGDVIEAYRMKEVPVE.

The segment at 39–321 (DDASEKHLRN…KRDGRMKETT (283 aa)) is disordered. Residues 95–146 (KSSNNESTTRNNNNNKNGNQNRNNTNGRPNNNQNRPNNNRNQNNNRNGNRPN) are compositionally biased toward low complexity. Basic and acidic residues predominate over residues 148 to 158 (PKRDEKQDRIR). Low complexity predominate over residues 159–174 (ASVAEAARMAAQANRE). Residues 180 to 190 (PQANRQRTNSA) are compositionally biased toward polar residues. Low complexity-rich tracts occupy residues 201 to 231 (NNQNRPNNNNRNGNNVNRTNNNNRPNNNNRN), 237 to 267 (SRPNNTNQTTNNRPANNTTRPAAPAATTANN), and 278 to 296 (GRNNNSRGGNRFGNNQNRP). Residues 302 to 313 (RKNKKRNRKAKR) are compositionally biased toward basic residues. The region spanning 419-588 (SRPPVVTIMG…LLQAEVLELK (170 aa)) is the tr-type G domain. A G1 region spans residues 428–435 (GHVDHGKT). 428 to 435 (GHVDHGKT) contributes to the GTP binding site. The G2 stretch occupies residues 453–457 (GITQG). The tract at residues 474–477 (DTPG) is G3. GTP contacts are provided by residues 474 to 478 (DTPGH) and 528 to 531 (NKID). A G4 region spans residues 528 to 531 (NKID). A G5 region spans residues 564–566 (SAK).

The protein belongs to the TRAFAC class translation factor GTPase superfamily. Classic translation factor GTPase family. IF-2 subfamily.

It localises to the cytoplasm. One of the essential components for the initiation of protein synthesis. Protects formylmethionyl-tRNA from spontaneous hydrolysis and promotes its binding to the 30S ribosomal subunits. Also involved in the hydrolysis of GTP during the formation of the 70S ribosomal complex. In Pediococcus pentosaceus (strain ATCC 25745 / CCUG 21536 / LMG 10740 / 183-1w), this protein is Translation initiation factor IF-2.